Reading from the N-terminus, the 462-residue chain is 3-isopropylmalate dehydratase large subunit (462 aa).

Residues Cys337, Cys397, and Cys400 each coordinate [4Fe-4S] cluster.

Belongs to the aconitase/IPM isomerase family. LeuC type 1 subfamily. As to quaternary structure, heterodimer of LeuC and LeuD. [4Fe-4S] cluster serves as cofactor.

The catalysed reaction is (2R,3S)-3-isopropylmalate = (2S)-2-isopropylmalate. Its pathway is amino-acid biosynthesis; L-leucine biosynthesis; L-leucine from 3-methyl-2-oxobutanoate: step 2/4. Its function is as follows. Catalyzes the isomerization between 2-isopropylmalate and 3-isopropylmalate, via the formation of 2-isopropylmaleate. In Listeria monocytogenes serotype 4a (strain HCC23), this protein is 3-isopropylmalate dehydratase large subunit.